We begin with the raw amino-acid sequence, 44 residues long: Putative protein PsbN (44 aa).

A helical transmembrane segment spans residues 3–23 (IISFLSTIFLGFFIISTTIYS).

This sequence belongs to the PsbN family.

The protein resides in the plastid. Its subcellular location is the chloroplast thylakoid membrane. In terms of biological role, may play a role in photosystem I and II biogenesis. This Euglena gracilis protein is Putative protein PsbN.